Consider the following 919-residue polypeptide: Glutamate receptor ionotropic, kainate 3 (919 aa).

Residues 1 to 31 (MTAPWRRLRSLVWEYWAGFLVCAFWIPDSRG) form the signal peptide. Residues 32–563 (MPHVIRIGGI…VFSFLNPLSP (532 aa)) lie on the Extracellular side of the membrane. Asn70, Asn76, Asn278, Asn381, Asn415, Asn426, and Asn433 each carry an N-linked (GlcNAc...) asparagine glycan. A disulfide bridge links Cys99 with Cys350. Positions 518, 520, and 525 each coordinate L-glutamate. N-linked (GlcNAc...) asparagine glycans are attached at residues Asn548 and Asn551. Residues 564-584 (DIWMYVLLAYLGVSCVLFVIA) traverse the membrane as a helical segment. Topologically, residues 585-636 (RFSPYEWYDAHPCNPGSEVVENNFTLLNSFWFGMGSLMQQGSELMPKALSTR) are cytoplasmic. A helical membrane pass occupies residues 637–657 (IIGGIWWFFTLIIISSYTANL). The Extracellular portion of the chain corresponds to 658–820 (AAFLTVERME…KEASALGIQK (163 aa)). L-glutamate-binding residues include Ala691, Thr692, and Glu739. Asn752 is a glycosylation site (N-linked (GlcNAc...) asparagine). The helical transmembrane segment at 821-841 (IGGIFIVLAAGLVLSVLVAVG) threads the bilayer. Residues 842–919 (EFIYKLRKTA…CSTSLAPVFP (78 aa)) lie on the Cytoplasmic side of the membrane. Ser869 is modified (phosphoserine). Lys887 is covalently cross-linked (Glycyl lysine isopeptide (Lys-Gly) (interchain with G-Cter in SUMO1)).

The protein belongs to the glutamate-gated ion channel (TC 1.A.10.1) family. GRIK3 subfamily. In terms of assembly, homotetramer, and heterotetramer with either GRIK4 or GRIK5. Can form functional heteromeric receptors with GRIK2. Interacts with PRKCABP. Interacts with NETO2. In terms of tissue distribution, detected in whole brain, cerebellum, brain cortex and hippocampus.

It localises to the cell membrane. Its subcellular location is the postsynaptic cell membrane. It catalyses the reaction Ca(2+)(in) = Ca(2+)(out). Glutamate-gated receptor activity inhibited by spermine. Functionally, ionotropic glutamate receptor that functions as a cation-permeable ligand-gated ion channel, gated by L-glutamate and the glutamatergic agonist kainic acid. Binding of the excitatory neurotransmitter L-glutamate induces a conformation change, leading to the opening of the cation channel, and thereby converts the chemical signal to an electrical impulse. The receptor then desensitizes rapidly and enters a transient inactive state, characterized by the presence of bound agonist. In association with GRIK2, involved in presynaptic facilitation of glutamate release at hippocampal mossy fiber synapses. In Mus musculus (Mouse), this protein is Glutamate receptor ionotropic, kainate 3 (Grik3).